The chain runs to 166 residues: Small ribosomal subunit protein uS5 (166 aa).

Positions 11-74 (LQEKLVQVNR…DQARRNMVKV (64 aa)) constitute an S5 DRBM domain.

This sequence belongs to the universal ribosomal protein uS5 family. Part of the 30S ribosomal subunit. Contacts proteins S4 and S8.

Functionally, with S4 and S12 plays an important role in translational accuracy. In terms of biological role, located at the back of the 30S subunit body where it stabilizes the conformation of the head with respect to the body. The sequence is that of Small ribosomal subunit protein uS5 from Chromohalobacter salexigens (strain ATCC BAA-138 / DSM 3043 / CIP 106854 / NCIMB 13768 / 1H11).